The sequence spans 283 residues: Thymidylate synthase (283 aa).

Arg-22 contacts dUMP. Cys-160 (nucleophile) is an active-site residue. Residues 180–183 (RSCD), Asn-191, and 221–223 (HIY) each bind dUMP. Residue Asp-183 coordinates (6R)-5,10-methylene-5,6,7,8-tetrahydrofolate. A (6R)-5,10-methylene-5,6,7,8-tetrahydrofolate-binding site is contributed by Ala-282.

It belongs to the thymidylate synthase family. Bacterial-type ThyA subfamily. In terms of assembly, homodimer.

Its subcellular location is the cytoplasm. The enzyme catalyses dUMP + (6R)-5,10-methylene-5,6,7,8-tetrahydrofolate = 7,8-dihydrofolate + dTMP. It participates in pyrimidine metabolism; dTTP biosynthesis. In terms of biological role, catalyzes the reductive methylation of 2'-deoxyuridine-5'-monophosphate (dUMP) to 2'-deoxythymidine-5'-monophosphate (dTMP) while utilizing 5,10-methylenetetrahydrofolate (mTHF) as the methyl donor and reductant in the reaction, yielding dihydrofolate (DHF) as a by-product. This enzymatic reaction provides an intracellular de novo source of dTMP, an essential precursor for DNA biosynthesis. The sequence is that of Thymidylate synthase from Idiomarina loihiensis (strain ATCC BAA-735 / DSM 15497 / L2-TR).